Here is a 397-residue protein sequence, read N- to C-terminus: Corticosteroid-binding globulin (397 aa).

The first 22 residues, 1–22 (MSLALYTCLFWLCTSGLWTTQA), serve as a signal peptide directing secretion. Residues N89, N169, N217, and N232 are each glycosylated (N-linked (GlcNAc...) asparagine). Residue Q247 coordinates cortisol. N253 carries N-linked (GlcNAc...) asparagine glycosylation. Residue D279 participates in cortisol binding. N320 is a glycosylation site (N-linked (GlcNAc...) asparagine). W385 provides a ligand contact to cortisol.

This sequence belongs to the serpin family. Expressed by the liver; secreted in plasma.

The protein localises to the secreted. In terms of biological role, major transport protein for glucocorticoids and progestins in the blood of almost all vertebrate species. The chain is Corticosteroid-binding globulin (Serpina6) from Mus musculus (Mouse).